The primary structure comprises 534 residues: Protein tweety homolog 2 (534 aa).

The Extracellular segment spans residues 1-44 (MAAARVEYIAPWWVYWLHNFPHVDLSLRQKSPDFNPKDPGYQQT). A helical transmembrane segment spans residues 45-65 (LLFVALIVALCAAVNLLFVSV). The Cytoplasmic portion of the chain corresponds to 66-87 (YLICLCCCKKEDETETKKTSSC). Residues 88 to 108 (CVTWTAAVSGLLCCAAVGIGF) form a helical membrane-spanning segment. The Extracellular portion of the chain corresponds to 109 to 213 (YGNSETNDGV…QTSTIEYYRW (105 aa)). Positions 113 and 116 each coordinate Ca(2+). Residue Asn-129 is glycosylated (N-linked (GlcNAc...) asparagine). The RGD signature appears at 164-166 (RGD). Asn-197 carries an N-linked (GlcNAc...) asparagine glycan. Residues 214 to 234 (LSYLLLFISYVVICLVTCVGL) traverse the membrane as a helical segment. The Cytoplasmic segment spans residues 235–240 (AKKSKC). A helical transmembrane segment spans residues 241-261 (LLLIMLCFGLIALMLSWTSLA). The Extracellular portion of the chain corresponds to 262–388 (LETSSAMGTS…IGICYDGVEG (127 aa)). Disulfide bonds link Cys-274–Cys-382 and Cys-300–Cys-367. N-linked (GlcNAc...) asparagine glycans are attached at residues Asn-283 and Asn-352. A helical transmembrane segment spans residues 389 to 409 (MLYLGLFSLLAALAFTAMVCA). Residues 410–534 (MPQAWKHLEA…SSIYSNVFPA (125 aa)) lie on the Cytoplasmic side of the membrane.

It belongs to the tweety family. As to quaternary structure, forms cis-homodimers in the presence of Ca(+2) and forms monomers and trans-dimers in the absence of Ca(2+).

Its subcellular location is the cell membrane. It carries out the reaction chloride(in) = chloride(out). It catalyses the reaction L-glutamate(out) = L-glutamate(in). May act as a calcium-independent, swelling-dependent volume-regulated anion channel (VRAC-swell) which plays a pivotal role in the process of regulatory volume decrease (RVD) in the brain through the efflux of anions like chloride and organic osmolytes like glutamate. Probable large-conductance Ca(2+)-activated chloride channel. The protein is Protein tweety homolog 2 (ttyh2) of Xenopus tropicalis (Western clawed frog).